The sequence spans 378 residues: Non-functional pseudokinase ZRK6 (378 aa).

Positions 34-378 (DGKCNPIKNF…SNNRSQMSSI (345 aa)) constitute a Protein kinase domain. Residues 40–48 (IKNFSYDQI) and Lys83 each bind ATP.

This sequence belongs to the protein kinase superfamily. Ser/Thr protein kinase family. ZRK subfamily. In terms of assembly, interacts with RPP13L4/ZAR1.

This is Non-functional pseudokinase ZRK6 from Arabidopsis thaliana (Mouse-ear cress).